Reading from the N-terminus, the 310-residue chain is Olfactory receptor 4K14 (310 aa).

Residues 1 to 25 are Extracellular-facing; that stretch reads MDPQNYSLVSEFVLHGLCTSRHLQN. A glycan (N-linked (GlcNAc...) asparagine) is linked at asparagine 5. Residues 26–49 form a helical membrane-spanning segment; sequence FFFIFFFGVYVAIMLGNLLILVTV. Topologically, residues 50-58 are cytoplasmic; sequence ISDPCLHSS. The chain crosses the membrane as a helical span at residues 59-80; sequence PMYFLLGNLAFLDMWLASFATP. The Extracellular portion of the chain corresponds to 81–101; the sequence is KMIRDFLSDQKLISFGGCMAQ. Cysteines 98 and 190 form a disulfide. The chain crosses the membrane as a helical span at residues 102–121; it reads IFFLHFTGGAEMVLLVSMAY. Residues 122 to 140 lie on the Cytoplasmic side of the membrane; sequence DRYVAICKPLHYMTLMSWQ. Residues 141–159 traverse the membrane as a helical segment; sequence TCIRLVLASWVVGFVHSIS. Residues 160–196 are Extracellular-facing; it reads QVAFTVNLPYCGPNEVDSFFCDLPLVIKLACMDTYVL. Residues 197–220 traverse the membrane as a helical segment; it reads GIIMISDSGLLSLSCFLLLLISYT. Over 221–236 the chain is Cytoplasmic; that stretch reads VILLAIRQRAAGSTSK. Residues 237 to 259 traverse the membrane as a helical segment; that stretch reads ALSTCSAHIMVVTLFFGPCIFVY. Topologically, residues 260 to 270 are extracellular; sequence VRPFSRFSVDK. Residues 271–290 form a helical membrane-spanning segment; that stretch reads LLSVFYTIFTPLLNPIIYTL. The Cytoplasmic portion of the chain corresponds to 291-310; it reads RNEEMKAAMKKLQNRRVTFQ.

The protein belongs to the G-protein coupled receptor 1 family.

Its subcellular location is the cell membrane. Functionally, odorant receptor. The protein is Olfactory receptor 4K14 (OR4K14) of Homo sapiens (Human).